The chain runs to 22 residues: MMMFITGYDINQKQKKRYGLRG.

The helical transmembrane segment at 3-22 (MFITGYDINQKQKKRYGLRG) threads the bilayer.

The protein belongs to the asfivirus C84L family.

The protein localises to the host membrane. This is an uncharacterized protein from Ornithodoros (relapsing fever ticks).